A 356-amino-acid polypeptide reads, in one-letter code: RGARGETEGRWSREAPGAWACGVERGGCQHECKGSAGASNCLCPADAALQADGRSCGLPAEHPCHQLCEHFCHLHGLGNYTCICEAGYQLAADQHRCEDVDDCAQLPSPCPQRCVNTEGGFQCHCDTGYELVDGECVDPVDPCFDNNCEYQCQPVGRSEHKCICAEGFAPVPGAPHKCQMFCNQTSCPADCDPHYPTICRCPEGYIIDEGSTCTDINECDTNICPGQCHNLPGTYECICGPDSALSGQIGIDCDPTQVNEERGTPEDYGGSGEPPVSPTPGATARPSPAPAGPLHSGVLVGISIASLSLVVALLALLCHLRKKQGASRGELEYKCGVPAKELMLQQVKTERTPQKL.

Residues R1–S296 are Extracellular-facing. EGF-like domains follow at residues G17–G57 and A60–E98. Cystine bridges form between C21/C32, C28/C41, C43/C56, C64/C72, C68/C82, C84/C97, C103/C114, C110/C123, C125/C136, C143/C152, C148/C162, C164/C178, C182/C191, C187/C199, C201/C213, C219/C228, C224/C237, and C239/C253. Residues D99–V137 form the EGF-like 3; calcium-binding domain. 2 EGF-like domains span residues P139–Q179 and C178–T214. Positions D215–D254 constitute an EGF-like 6; calcium-binding domain. Residues P255 to P290 are disordered. O-linked (Xyl...) (chondroitin sulfate) serine glycosylation occurs at S271. Residues G297 to L320 traverse the membrane as a helical segment. Topologically, residues R321–L356 are cytoplasmic.

As to quaternary structure, interacts with ITGAL, ITGAM and ITGB2. Interacts with thrombin/F2; this interaction switches the specificity of thrombin from a procoagulant to an anticoagulant and antifibrinolytic protease. Interacts with ANGP1 and ANGP2; these interactions significantly inhibit the generation of activated PC and TAFIa/CPB2 by the thrombin/thrombomodulin complex. Interacts with PF4; this interaction enhances generation of activated protein C. Interacts with HMGB1; this interaction inhibits HMGB1 inflammatory activity. In terms of tissue distribution, endothelial cells are unique in synthesizing thrombomodulin.

Its subcellular location is the membrane. Functionally, endothelial cell receptor that plays a critical role in regulating several physiological processes including hemostasis, coagulation, fibrinolysis, inflammation, and angiogenesis. Acts as a cofactor for thrombin activation of protein C/PROC on the surface of vascular endothelial cells leading to initiation of the activated protein C anticoagulant pathway. Also accelerates the activation of the plasma carboxypeptidase B2/CPB2, which catalyzes removal of C-terminal basic amino acids from its substrates including kinins or anaphylatoxins leading to fibrinolysis inhibition. Plays critical protective roles in changing the cleavage specificity of protease-activated receptor 1/PAR1, inhibiting endothelial cell permeability and inflammation. Suppresses inflammation distinctly from its anticoagulant cofactor activity by sequestering HMGB1 thereby preventing it from engaging cellular receptors such as RAGE and contributing to the inflammatory response. This Bos taurus (Bovine) protein is Thrombomodulin (THBD).